Here is a 397-residue protein sequence, read N- to C-terminus: tRNA (guanine-N(7)-)-methyltransferase non-catalytic subunit wuho (397 aa).

WD repeat units follow at residues 75–115, 163–202, 206–244, and 303–343; these read KVEV…AQLL, GHLSIVYDVLWSEDQQYIITCDRDDKIRVTNYPATFDIHS, GHKEFVSGLAMLTEQHIISASGDKTLRVWNYTCGKELLL, and AGTW…RASG.

It belongs to the WD repeat TRM82 family. In terms of assembly, forms a heterodimer with the catalytic subunit Mettl1. Interacts with mei-P26 and weakly interacts with bgcn; required for the function or formation of the mei-P26-bgcn-bam-sxl complex. Interacts with nanos; may be involved in mei-P26-dependent derepression of the BMP signaling pathway. Interacts with Myc; the interaction may be mediated by mei-P26 and may be involved in the regulation of ribosome biogenesis. In terms of tissue distribution, in testis, it is present at high level in hub cells, a niche for germline stem cells of testis. Ubiquitously expressed in all testicular cells throughout spermatogenesis. Ubiquitously expressed in all germline and somatic cells of the ovary.

The protein resides in the nucleus. It localises to the cytoplasm. The protein operates within tRNA modification; N(7)-methylguanine-tRNA biosynthesis. Required for the Mettl1-dependent formation of N(7)-methylguanine at position 46 (m7G46) in tRNA. In the Mettl1-wuho methyltransferase complex, it is required to stabilize and induce conformational changes of the catalytic subunit. Required for binding of nanos mRNA and repression of translation by the mei-P26-bgcn-bam-sxl complex. May cooperate with mei-P26 and nanos to derepress the BMP signaling pathway. May cooperate with mei-P26 to suppress expression of a subset of microRNAs. May cooperate with mei-P26 to regulate bam expression levels in germline cells during gametogenesis. Required to promote mitosis to meiosis transition during gametogenesis. May regulate germline cell division in part by regulating ribosome biogenesis. This chain is tRNA (guanine-N(7)-)-methyltransferase non-catalytic subunit wuho, found in Drosophila persimilis (Fruit fly).